The chain runs to 395 residues: MTTMGDLPGDLVEEILSRVPLTSLRAIRSTCQKWNSLSKSQICGRKATAAENKFLGFMMKDSRVCSMKFDLQGIRNDDGELVEPSIKQVSKLDQIEVSQVFHCDGLVLCIIKDNTGLLVWNPYLGQTRWIHPRNNYQIEDRYALGYDNNRNHKILRIFDLYPSSNRVFGYEVYDFSSNSWKVLDVIPEWDIQSHFRGASLKGNAYFPAQKKETVGGIKTINIEDVLLCFDFTRERFGPPLPLPFHSYNADFFVSLACVREEQLAVLYQRWGAFETIEICVTNKIDPNTVSWSKFLITSTGFPVDTFSGSFFIDEEKKVAVVFDLDRYKPTETCRYQIVYIIGQDEYFKSVNMGVAPNIAKNSYQAYCVPLVCSSSYVPSLVQLQINKPGKRKESN.

An F-box domain is found at Met-1–Ala-47. 4 Kelch repeats span residues Ile-154 to Gly-202, Lys-210 to Ala-256, Val-265 to Glu-314, and Ile-337 to Leu-383.

In Arabidopsis thaliana (Mouse-ear cress), this protein is F-box/kelch-repeat protein At3g13680.